The sequence spans 136 residues: Large ribosomal subunit protein uL16 (136 aa).

It belongs to the universal ribosomal protein uL16 family. As to quaternary structure, part of the 50S ribosomal subunit.

Its function is as follows. Binds 23S rRNA and is also seen to make contacts with the A and possibly P site tRNAs. In Actinobacillus pleuropneumoniae serotype 5b (strain L20), this protein is Large ribosomal subunit protein uL16.